The primary structure comprises 261 residues: 1,6-dihydroxycyclohexa-2,4-diene-1-carboxylate dehydrogenase (261 aa).

An NAD(+)-binding site is contributed by 13–37 (IVTGAAQGIGRGVALRIAQEGGCLI). Serine 145 contributes to the substrate binding site. The active-site Proton acceptor is the tyrosine 156.

Belongs to the short-chain dehydrogenases/reductases (SDR) family. In terms of assembly, homodimer.

The catalysed reaction is (1R,6S)-1,6-dihydroxycyclohexa-2,4-diene-1-carboxylate + NAD(+) = catechol + CO2 + NADH. It participates in aromatic compound metabolism; benzoate degradation via hydroxylation; catechol from benzoate: step 2/2. In terms of biological role, degradation of 2-hydro-1,2-dihydroxy benzoate (DHB) to catechol. The protein is 1,6-dihydroxycyclohexa-2,4-diene-1-carboxylate dehydrogenase (benD) of Acinetobacter baylyi (strain ATCC 33305 / BD413 / ADP1).